The chain runs to 500 residues: Glucose-1-phosphate adenylyltransferase small subunit 1, chloroplastic/amyloplastic (500 aa).

The N-terminal 50 residues, 1–50 (MAMMAMGAASWAPIPAPARAAAAFYPGRDLAAARRRRGAAARRPFVFTPR), are a transit peptide targeting the chloroplast.

The protein belongs to the bacterial/plant glucose-1-phosphate adenylyltransferase family. As to quaternary structure, heterotetramer composed of two small and two large subunits. As to expression, expressed in leaves.

Its subcellular location is the plastid. It is found in the chloroplast. The protein localises to the amyloplast. It catalyses the reaction alpha-D-glucose 1-phosphate + ATP + H(+) = ADP-alpha-D-glucose + diphosphate. The protein operates within glycan biosynthesis; starch biosynthesis. With respect to regulation, activated by 3'phosphoglycerate, inhibited by orthophosphate. Allosteric regulation. Involved in synthesis of starch. Catalyzes the synthesis of ADP-glucose, a molecule that serves as an activated glycosyl donor for alpha-1,4-glucan synthesis. Essential for starch synthesis in leaf chloroplasts and endosperm amyloplasts. The protein is Glucose-1-phosphate adenylyltransferase small subunit 1, chloroplastic/amyloplastic of Oryza sativa subsp. japonica (Rice).